We begin with the raw amino-acid sequence, 429 residues long: Adenylosuccinate synthetase (429 aa).

Residues 12–18 and 40–42 contribute to the GTP site; these read GDEGKGK and GHT. The Proton acceptor role is filled by aspartate 13. Mg(2+) contacts are provided by aspartate 13 and glycine 40. Residues 13-16, 38-41, threonine 128, arginine 142, glutamine 223, threonine 238, and arginine 302 each bind IMP; these read DEGK and NAGH. The active-site Proton donor is the histidine 41. 298-304 lines the substrate pocket; the sequence is VNTGRPR. Residues arginine 304, 330–332, and 412–414 contribute to the GTP site; these read KLD and GVG.

Belongs to the adenylosuccinate synthetase family. Homodimer. Mg(2+) serves as cofactor.

The protein resides in the cytoplasm. The catalysed reaction is IMP + L-aspartate + GTP = N(6)-(1,2-dicarboxyethyl)-AMP + GDP + phosphate + 2 H(+). Its pathway is purine metabolism; AMP biosynthesis via de novo pathway; AMP from IMP: step 1/2. In terms of biological role, plays an important role in the de novo pathway of purine nucleotide biosynthesis. Catalyzes the first committed step in the biosynthesis of AMP from IMP. This chain is Adenylosuccinate synthetase, found in Arthrobacter sp. (strain FB24).